A 504-amino-acid chain; its full sequence is MWWFRRRDRAPLRATSSLSLRWRVMLLAMSMVAMVVVLMSFAVYAVISAALYSDIDNQLQSRAQLLIASGSLAADPGKAIEGTAYSDVNAMLVNPGQSIYTAQQPGQTLPVGAAEKAVIRGELFMSRRTTADQRVLAIRLTNGSSLLISKSLKPTEAVMNKLRWVLLIVGGIGVAVAAVAGGMVTRAGLRPVGRLTEAAERVARTDDLRPIPVFGSDELARLTEAFNLMLRALAESRERQARLVTDAGHELRTPLTSLRTNVELLMASMAPGAPRLPKQEMVDLRADVLAQIEELSTLVGDLVDLSRGDAGEVVHEPVDMADVVDRSLERVRRRRNDILFDVEVIGWQVYGDTAGLSRMALNLMDNAAKWSPPGGHVGVRLSQLDASHAELVVSDRGPGIPVQERRLVFERFYRSASARALPGSGLGLAIVKQVVLNHGGLLRIEDTDPGGQPPGTSIYVLLPGRRMPIPQLPGATAGARSTDIENSRGSANVISVESQSTRAT.

Residues 1 to 26 (MWWFRRRDRAPLRATSSLSLRWRVML) lie on the Cytoplasmic side of the membrane. The helical transmembrane segment at 27–47 (LAMSMVAMVVVLMSFAVYAVI) threads the bilayer. Over 48-163 (SAALYSDIDN…PTEAVMNKLR (116 aa)) the chain is Extracellular. The chain crosses the membrane as a helical span at residues 164–184 (WVLLIVGGIGVAVAAVAGGMV). The Cytoplasmic segment spans residues 185-504 (TRAGLRPVGR…SVESQSTRAT (320 aa)). Residues 186 to 238 (RAGLRPVGRLTEAAERVARTDDLRPIPVFGSDELARLTEAFNLMLRALAESRE) enclose the HAMP domain. Residues 246–466 (DAGHELRTPL…SIYVLLPGRR (221 aa)) form the Histidine kinase domain. Phosphohistidine; by autocatalysis is present on His-249. The interval 471–504 (QLPGATAGARSTDIENSRGSANVISVESQSTRAT) is disordered. Over residues 487–504 (SRGSANVISVESQSTRAT) the composition is skewed to polar residues.

Requires Mg(2+) as cofactor. Mn(2+) is required as a cofactor. In terms of processing, autophosphorylated.

Its subcellular location is the cell membrane. The catalysed reaction is ATP + protein L-histidine = ADP + protein N-phospho-L-histidine.. Member of the two-component regulatory system MprB/MprA which contributes to maintaining a balance among several systems involved in stress resistance and is required for establishment and maintenance of persistent infection in the host. In response to environmental signals MprB acts both as a membrane-associated protein kinase that undergoes autophosphorylation and subsequently transfers the phosphate to MprA, and a protein phosphatase that dephosphorylates phospho-MprA. The polypeptide is Signal transduction histidine-protein kinase/phosphatase MprB (mprB) (Mycobacterium tuberculosis (strain ATCC 25177 / H37Ra)).